Reading from the N-terminus, the 32-residue chain is ATP synthase 28 kDa subunit, mitochondrial (32 aa).

The protein resides in the mitochondrion. It is found in the mitochondrion inner membrane. Functionally, mitochondrial membrane ATP synthase (F(1)F(0) ATP synthase or Complex V) produces ATP from ADP in the presence of a proton gradient across the membrane which is generated by electron transport complexes of the respiratory chain. F-type ATPases consist of two structural domains, F(1) - containing the extramembraneous catalytic core and F(0) - containing the membrane proton channel, linked together by a central stalk and a peripheral stalk. During catalysis, ATP synthesis in the catalytic domain of F(1) is coupled via a rotary mechanism of the central stalk subunits to proton translocation. Part of the complex F(0) domain. This chain is ATP synthase 28 kDa subunit, mitochondrial, found in Spinacia oleracea (Spinach).